The chain runs to 124 residues: Small ribosomal subunit protein uS12 (124 aa).

At aspartate 89 the chain carries 3-methylthioaspartic acid.

This sequence belongs to the universal ribosomal protein uS12 family. Part of the 30S ribosomal subunit. Contacts proteins S8 and S17. May interact with IF1 in the 30S initiation complex.

With S4 and S5 plays an important role in translational accuracy. Functionally, interacts with and stabilizes bases of the 16S rRNA that are involved in tRNA selection in the A site and with the mRNA backbone. Located at the interface of the 30S and 50S subunits, it traverses the body of the 30S subunit contacting proteins on the other side and probably holding the rRNA structure together. The combined cluster of proteins S8, S12 and S17 appears to hold together the shoulder and platform of the 30S subunit. This is Small ribosomal subunit protein uS12 from Histophilus somni (strain 129Pt) (Haemophilus somnus).